The following is a 309-amino-acid chain: Glutaminase (309 aa).

Residues serine 64, asparagine 114, glutamate 160, asparagine 167, tyrosine 191, tyrosine 243, and valine 261 each coordinate substrate.

The protein belongs to the glutaminase family. Homotetramer.

It carries out the reaction L-glutamine + H2O = L-glutamate + NH4(+). This is Glutaminase from Rhodopseudomonas palustris (strain BisB18).